Consider the following 74-residue polypeptide: UPF0435 protein ABC2298 (74 aa).

This sequence belongs to the UPF0435 family.

The protein is UPF0435 protein ABC2298 of Shouchella clausii (strain KSM-K16) (Alkalihalobacillus clausii).